The following is a 254-amino-acid chain: PF03932 family protein CutC (254 aa).

This sequence belongs to the CutC family.

The protein localises to the cytoplasm. The protein is PF03932 family protein CutC of Yersinia pestis bv. Antiqua (strain Angola).